A 150-amino-acid polypeptide reads, in one-letter code: Macrodomain Ter protein (150 aa).

This sequence belongs to the MatP family. Homodimer.

It is found in the cytoplasm. Its function is as follows. Required for spatial organization of the terminus region of the chromosome (Ter macrodomain) during the cell cycle. Prevents early segregation of duplicated Ter macrodomains during cell division. Binds specifically to matS, which is a 13 bp signature motif repeated within the Ter macrodomain. In Salmonella typhi, this protein is Macrodomain Ter protein.